The sequence spans 388 residues: Succinate--CoA ligase [ADP-forming] subunit beta (388 aa).

The region spanning K9–H244 is the ATP-grasp domain. ATP-binding positions include K46, G53 to G55, E99, T102, and E107. The Mg(2+) site is built by N199 and D213. Residues N264 and G321 to V323 each bind substrate.

This sequence belongs to the succinate/malate CoA ligase beta subunit family. Heterotetramer of two alpha and two beta subunits. The cofactor is Mg(2+).

It carries out the reaction succinate + ATP + CoA = succinyl-CoA + ADP + phosphate. It catalyses the reaction GTP + succinate + CoA = succinyl-CoA + GDP + phosphate. Its pathway is carbohydrate metabolism; tricarboxylic acid cycle; succinate from succinyl-CoA (ligase route): step 1/1. Functionally, succinyl-CoA synthetase functions in the citric acid cycle (TCA), coupling the hydrolysis of succinyl-CoA to the synthesis of either ATP or GTP and thus represents the only step of substrate-level phosphorylation in the TCA. The beta subunit provides nucleotide specificity of the enzyme and binds the substrate succinate, while the binding sites for coenzyme A and phosphate are found in the alpha subunit. This Pseudomonas fluorescens (strain SBW25) protein is Succinate--CoA ligase [ADP-forming] subunit beta.